A 492-amino-acid chain; its full sequence is Catalase isozyme 2 (492 aa).

Residues H65 and N138 contribute to the active site. Y347 contributes to the heme binding site.

The protein belongs to the catalase family. As to quaternary structure, homotetramer. The cofactor is heme. As to expression, high levels in green cotyledons, mature leaf, stem and green hypocotyl.

The protein resides in the peroxisome. The enzyme catalyses 2 H2O2 = O2 + 2 H2O. Occurs in almost all aerobically respiring organisms and serves to protect cells from the toxic effects of hydrogen peroxide. The protein is Catalase isozyme 2 (CAT2) of Cucurbita pepo (Vegetable marrow).